Consider the following 198-residue polypeptide: Ribonuclease HII (198 aa).

The 189-residue stretch at 10–198 (QLVAGVDEVG…PVKRALGLAS (189 aa)) folds into the RNase H type-2 domain. 3 residues coordinate a divalent metal cation: D16, E17, and D108.

Belongs to the RNase HII family. The cofactor is Mn(2+). It depends on Mg(2+) as a cofactor.

The protein resides in the cytoplasm. It carries out the reaction Endonucleolytic cleavage to 5'-phosphomonoester.. Endonuclease that specifically degrades the RNA of RNA-DNA hybrids. The polypeptide is Ribonuclease HII (Shigella dysenteriae serotype 1 (strain Sd197)).